A 441-amino-acid chain; its full sequence is tRNA modification GTPase MnmE (441 aa).

(6S)-5-formyl-5,6,7,8-tetrahydrofolate contacts are provided by arginine 23, glutamate 81, and lysine 121. One can recognise a TrmE-type G domain in the interval 218 to 363 (GFRVAIVGPP…LESWIAAFVS (146 aa)). Asparagine 228 contributes to the K(+) binding site. GTP is bound by residues 228–233 (NAGKSS), 247–253 (TDIAGTT), 272–275 (DTAG), and 326–329 (NKAD). Serine 232 contacts Mg(2+). K(+) is bound by residues threonine 247, isoleucine 249, and threonine 252. Threonine 253 serves as a coordination point for Mg(2+). Position 441 (lysine 441) interacts with (6S)-5-formyl-5,6,7,8-tetrahydrofolate.

Belongs to the TRAFAC class TrmE-Era-EngA-EngB-Septin-like GTPase superfamily. TrmE GTPase family. In terms of assembly, homodimer. Heterotetramer of two MnmE and two MnmG subunits. K(+) serves as cofactor.

Its subcellular location is the cytoplasm. Functionally, exhibits a very high intrinsic GTPase hydrolysis rate. Involved in the addition of a carboxymethylaminomethyl (cmnm) group at the wobble position (U34) of certain tRNAs, forming tRNA-cmnm(5)s(2)U34. The protein is tRNA modification GTPase MnmE of Hyphomonas neptunium (strain ATCC 15444).